The following is a 705-amino-acid chain: Effector protein AvrPphDPsv (705 aa).

Positions 1 to 15 are enriched in polar residues; the sequence is MNPLQSIQHNITTPP. 2 disordered regions span residues 1 to 40 and 175 to 205; these read MNPL…ISPS and RLET…RRES.

It is found in the secreted. Its function is as follows. Effector protein involved in non-host recognition. The polypeptide is Effector protein AvrPphDPsv (avrPphDPsv) (Pseudomonas savastanoi (Pseudomonas syringae pv. savastanoi)).